The following is a 391-amino-acid chain: 3-ketoacyl-CoA thiolase (391 aa).

Residue Cys95 is the Acyl-thioester intermediate of the active site. Catalysis depends on proton acceptor residues His347 and Cys377.

It belongs to the thiolase-like superfamily. Thiolase family. As to quaternary structure, heterotetramer of two alpha chains (FadB) and two beta chains (FadA).

Its subcellular location is the cytoplasm. It catalyses the reaction an acyl-CoA + acetyl-CoA = a 3-oxoacyl-CoA + CoA. The protein operates within lipid metabolism; fatty acid beta-oxidation. Catalyzes the final step of fatty acid oxidation in which acetyl-CoA is released and the CoA ester of a fatty acid two carbons shorter is formed. The sequence is that of 3-ketoacyl-CoA thiolase from Pseudomonas fluorescens (strain Pf0-1).